Reading from the N-terminus, the 446-residue chain is Peroxisomal biogenesis factor 3 (446 aa).

The Peroxisomal segment spans residues 1–12 (MARTGLQRHRGK). A helical membrane pass occupies residues 13-33 (LLGTGAVLGGLVVAGVVAAVA). Topologically, residues 34-446 (AKRWVRRQQQ…SASVYSNFGV (413 aa)) are cytoplasmic. Residues 101–122 (RAGEDDEQGSGGHASAGEGSVS) are disordered.

This sequence belongs to the peroxin-3 family.

Its subcellular location is the peroxisome membrane. Functionally, involved in peroxisome biosynthesis. This chain is Peroxisomal biogenesis factor 3 (PEX3), found in Eremothecium gossypii (strain ATCC 10895 / CBS 109.51 / FGSC 9923 / NRRL Y-1056) (Yeast).